The following is a 611-amino-acid chain: Protein ral2 (611 aa).

Kelch repeat units follow at residues 43-91, 96-149, and 175-224; these read EAFV…HSGD, KLIF…EVNG, and YLII…VINK. Ser604 is subject to Phosphoserine.

Its function is as follows. Essential for mating and for recognition of the mating pheromone, and for the determination of cell shape. Implicated in activation of the ras1 protein. This is Protein ral2 (ral2) from Schizosaccharomyces pombe (strain 972 / ATCC 24843) (Fission yeast).